The following is a 377-amino-acid chain: uncharacterized protein (377 aa).

Helical transmembrane passes span 26–46 (TFQN…VVAI), 67–87 (TVGS…WVII), 108–128 (FLTF…ISLT), and 135–155 (IDYG…ALYI).

The protein resides in the cell membrane. This is an uncharacterized protein from Methanocaldococcus jannaschii (strain ATCC 43067 / DSM 2661 / JAL-1 / JCM 10045 / NBRC 100440) (Methanococcus jannaschii).